Consider the following 268-residue polypeptide: Proenkephalin-A (268 aa).

The N-terminal stretch at 1 to 24 is a signal peptide; sequence MARLLRLCTWLVALGPGLLATVQA. 3 cysteine pairs are disulfide-bonded: Cys26–Cys48, Cys30–Cys52, and Cys33–Cys65. Positions 163–184 are disordered; sequence TGDDRDRENHHQEGGDSDEGVS. Over residues 164 to 176 the composition is skewed to basic and acidic residues; the sequence is GDDRDRENHHQEG. 2 consecutive propeptides follow at residues 197–208 and 218–228; these read SPQVEDEAKELQ and VGRPEWWMDYQ. Phosphoserine is present on Ser252.

It belongs to the opioid neuropeptide precursor family. Post-translationally, proenkephalin-A is cleaved by CTSL to generate Met-enkephalin. In terms of processing, processed and degraded by ACE. Probably cleaved by ACE. Post-translationally, processed by ACE to generate Met-enkephalin in the nucleus accumbens of the brain. In terms of processing, the N-terminal domain contains 6 conserved cysteines thought to be involved in disulfide bonding and/or processing.

The protein localises to the cytoplasmic vesicle. The protein resides in the secretory vesicle. It localises to the chromaffin granule lumen. Its subcellular location is the secreted. Its function is as follows. Neuropeptide that competes with and mimic the effects of opiate drugs. They play a role in a number of physiologic functions, including pain perception and responses to stress. In terms of biological role, met-enkephalin-Arg-Phe neuropeptide acts as a strong ligand of Mu-type opioid receptor OPRM1. Met-enkephalin-Arg-Phe-binding to OPRM1 in the nucleus accumbens of the brain increases activation of OPRM1, leading to long-term synaptic depression of glutamate release. Functionally, increases glutamate release in the striatum and decreases GABA concentration in the striatum. Increases glutamate release in the striatum. The sequence is that of Proenkephalin-A (PENK) from Cavia porcellus (Guinea pig).